The sequence spans 863 residues: DNA mismatch repair protein MutS 2 (863 aa).

626-633 (GPNMSGKS) is a binding site for ATP.

The protein belongs to the DNA mismatch repair MutS family.

This protein is involved in the repair of mismatches in DNA. It is possible that it carries out the mismatch recognition step. This protein has a weak ATPase activity. This Halobacterium salinarum (strain ATCC 700922 / JCM 11081 / NRC-1) (Halobacterium halobium) protein is DNA mismatch repair protein MutS 2 (mutS2).